The primary structure comprises 217 residues: Melanocortin-2 receptor accessory protein 2A (217 aa).

The N-linked (GlcNAc...) asparagine glycan is linked to Asn-8. A helical membrane pass occupies residues Ile-42–Thr-62.

Belongs to the MRAP family. Interacts with mc4r.

The protein localises to the cell membrane. It is found in the endoplasmic reticulum membrane. Its function is as follows. Inhibitor of melanocortin receptor 4 (mc4r), a receptor involved in energy homeostasis. Plays a role during larval development in the control of energy homeostasis and body weight regulation by decreasing ligand-sensitivity of mc4r and mc4r-mediated generation of cAMP, leading to stimulate growth during larval development. Acts by stabilizing an inactive conformation of mc4r during embryonic development, when all the energy consumed is obtained from the yolk sac, possibly to speed the rapid maturation to the mobile free-feeding juvenile stage reached at 5 dpf. This chain is Melanocortin-2 receptor accessory protein 2A (mrap2a), found in Danio rerio (Zebrafish).